The following is a 264-amino-acid chain: Thymidylate synthase (264 aa).

Arginine 21 is a dUMP binding site. Histidine 51 is a binding site for (6R)-5,10-methylene-5,6,7,8-tetrahydrofolate. 126–127 contacts dUMP; sequence RR. Residue cysteine 146 is the Nucleophile of the active site. DUMP is bound by residues 166 to 169, asparagine 177, and 207 to 209; these read RSCD and HLY. (6R)-5,10-methylene-5,6,7,8-tetrahydrofolate is bound at residue aspartate 169. Alanine 263 is a binding site for (6R)-5,10-methylene-5,6,7,8-tetrahydrofolate.

Belongs to the thymidylate synthase family. Bacterial-type ThyA subfamily. In terms of assembly, homodimer.

The protein localises to the cytoplasm. The catalysed reaction is dUMP + (6R)-5,10-methylene-5,6,7,8-tetrahydrofolate = 7,8-dihydrofolate + dTMP. The protein operates within pyrimidine metabolism; dTTP biosynthesis. In terms of biological role, catalyzes the reductive methylation of 2'-deoxyuridine-5'-monophosphate (dUMP) to 2'-deoxythymidine-5'-monophosphate (dTMP) while utilizing 5,10-methylenetetrahydrofolate (mTHF) as the methyl donor and reductant in the reaction, yielding dihydrofolate (DHF) as a by-product. This enzymatic reaction provides an intracellular de novo source of dTMP, an essential precursor for DNA biosynthesis. In Escherichia fergusonii (strain ATCC 35469 / DSM 13698 / CCUG 18766 / IAM 14443 / JCM 21226 / LMG 7866 / NBRC 102419 / NCTC 12128 / CDC 0568-73), this protein is Thymidylate synthase.